Consider the following 557-residue polypeptide: Hdr-like menaquinol oxidoreductase iron-sulfur subunit (557 aa).

4Fe-4S ferredoxin-type domains lie at 86–115 and 155–184; these read RAFK…GDPK and KEWY…AEVV. [4Fe-4S] cluster is bound by residues Cys95, Cys98, Cys101, Cys105, Cys164, Cys167, Cys170, and Cys174.

It depends on [4Fe-4S] cluster as a cofactor.

It localises to the membrane. Its function is as follows. Has menaquinol-oxidizing activity. The HmeC and HmeD subunits may together mediate electron transfer from menaquinol to an unidentified electron acceptor on the cytoplasmic side of the membrane. This Archaeoglobus profundus (strain DSM 5631 / JCM 9629 / NBRC 100127 / Av18) protein is Hdr-like menaquinol oxidoreductase iron-sulfur subunit (hmeD).